A 180-amino-acid polypeptide reads, in one-letter code: Large ribosomal subunit protein uL5 (180 aa).

Belongs to the universal ribosomal protein uL5 family. Part of the 50S ribosomal subunit; part of the 5S rRNA/L5/L18/L25 subcomplex. Contacts the 5S rRNA and the P site tRNA. Forms a bridge to the 30S subunit in the 70S ribosome.

Functionally, this is one of the proteins that bind and probably mediate the attachment of the 5S RNA into the large ribosomal subunit, where it forms part of the central protuberance. In the 70S ribosome it contacts protein S13 of the 30S subunit (bridge B1b), connecting the 2 subunits; this bridge is implicated in subunit movement. Contacts the P site tRNA; the 5S rRNA and some of its associated proteins might help stabilize positioning of ribosome-bound tRNAs. The chain is Large ribosomal subunit protein uL5 from Pediococcus pentosaceus (strain ATCC 25745 / CCUG 21536 / LMG 10740 / 183-1w).